The following is a 402-amino-acid chain: Nodal homolog 4-A (402 aa).

The first 18 residues, 1-18, serve as a signal peptide directing secretion; the sequence is MHLYFYCLILLFVPGGNS. The propeptide occupies 19–278; that stretch reads LGINSYLKHM…TIAHTRRHRR (260 aa). 3 N-linked (GlcNAc...) asparagine glycosylation sites follow: Asn37, Asn238, and Asn340. 3 disulfides stabilise this stretch: Cys302–Cys368, Cys331–Cys399, and Cys335–Cys401.

This sequence belongs to the TGF-beta family. In terms of assembly, homodimer; disulfide-linked. In terms of tissue distribution, during blastula stages, expressed in the endoderm at a higher level dorsally than ventrally. Expressed in the deep cells of the Spemann organizer at the gastrula stage. Expressed in the notochord (a derivative of the organizer) and neural tube during the neural stages.

It localises to the secreted. In terms of biological role, cooperation and regulatory loops of multiple nodals are essential for mesendoderm patterning in early embryos. Plays a role in mesoderm formation and may be required for neural development. This chain is Nodal homolog 4-A (nodal4-a), found in Xenopus laevis (African clawed frog).